A 120-amino-acid chain; its full sequence is Large ribosomal subunit protein uL18 (120 aa).

Belongs to the universal ribosomal protein uL18 family. Part of the 50S ribosomal subunit; part of the 5S rRNA/L5/L18/L25 subcomplex. Contacts the 5S and 23S rRNAs.

Its function is as follows. This is one of the proteins that bind and probably mediate the attachment of the 5S RNA into the large ribosomal subunit, where it forms part of the central protuberance. The sequence is that of Large ribosomal subunit protein uL18 from Finegoldia magna (strain ATCC 29328 / DSM 20472 / WAL 2508) (Peptostreptococcus magnus).